Here is a 299-residue protein sequence, read N- to C-terminus: N-carbamoylputrescine amidase (299 aa).

One can recognise a CN hydrolase domain in the interval Val10 to Leu268. Residue Glu49 is the Proton acceptor of the active site. The Proton donor role is filled by Lys122. Cys159 acts as the Nucleophile in catalysis.

It belongs to the carbon-nitrogen hydrolase superfamily. In terms of assembly, homooctamer (isoform 2). In terms of tissue distribution, expressed in roots, stems, leaves and flowers.

It carries out the reaction N-carbamoylputrescine + H2O + 2 H(+) = putrescine + NH4(+) + CO2. It functions in the pathway amine and polyamine biosynthesis; putrescine biosynthesis via agmatine pathway; putrescine from N-carbamoylputrescine (amidase route): step 1/1. Its function is as follows. Involved in polyamine biosynthesis. Catalyzes the hydrolysis of N-carbamoylputrescine to produce putrescine and ammonia. This Arabidopsis thaliana (Mouse-ear cress) protein is N-carbamoylputrescine amidase.